The chain runs to 246 residues: Adenylate kinase 4 (246 aa).

Residue alanine 2 is modified to N-acetylalanine. Position 43–48 (glycine 43–threonine 48) interacts with ATP. An NMP region spans residues serine 63–valine 92. AMP contacts are provided by residues threonine 64, arginine 69, glutamate 90–valine 92, glycine 118–arginine 121, and glutamine 125. The tract at residues glycine 159–aspartate 196 is LID. Arginine 160 lines the ATP pocket. Residues arginine 193 and arginine 204 each contribute to the AMP site.

Belongs to the adenylate kinase family. As to quaternary structure, monomer.

Its subcellular location is the cytoplasm. It catalyses the reaction AMP + ATP = 2 ADP. Its function is as follows. Catalyzes the reversible transfer of the terminal phosphate group between ATP and AMP. Plays an important role in cellular energy homeostasis and in adenine nucleotide metabolism. This is Adenylate kinase 4 (ADK1) from Arabidopsis thaliana (Mouse-ear cress).